The following is a 325-amino-acid chain: NADH-quinone oxidoreductase subunit H (325 aa).

The next 8 membrane-spanning stretches (helical) occupy residues 11–31 (ILIS…CGAF), 81–101 (VIFT…FAIV), 114–134 (IGIL…LFAG), 149–169 (ASAQ…GVVA), 186–206 (MWNV…GVAV), 237–257 (FFVG…TLFF), 265–285 (LPPF…FILI), and 304–324 (VCLP…LYNA).

The protein belongs to the complex I subunit 1 family. NDH-1 is composed of 13 different subunits. Subunits NuoA, H, J, K, L, M, N constitute the membrane sector of the complex.

It is found in the cell inner membrane. The enzyme catalyses a quinone + NADH + 5 H(+)(in) = a quinol + NAD(+) + 4 H(+)(out). Functionally, NDH-1 shuttles electrons from NADH, via FMN and iron-sulfur (Fe-S) centers, to quinones in the respiratory chain. The immediate electron acceptor for the enzyme in this species is believed to be ubiquinone. Couples the redox reaction to proton translocation (for every two electrons transferred, four hydrogen ions are translocated across the cytoplasmic membrane), and thus conserves the redox energy in a proton gradient. This subunit may bind ubiquinone. The protein is NADH-quinone oxidoreductase subunit H of Serratia proteamaculans (strain 568).